The sequence spans 246 residues: Acetoacetate decarboxylase (246 aa).

The active-site Schiff-base intermediate with acetoacetate is Lys116.

This sequence belongs to the ADC family.

The enzyme catalyses acetoacetate + H(+) = acetone + CO2. Functionally, catalyzes the conversion of acetoacetate to acetone and carbon dioxide. This Burkholderia vietnamiensis (strain G4 / LMG 22486) (Burkholderia cepacia (strain R1808)) protein is Acetoacetate decarboxylase.